An 82-amino-acid polypeptide reads, in one-letter code: Probable tautomerase XF_1725 (82 aa).

P2 functions as the Proton acceptor; via imino nitrogen in the catalytic mechanism.

The protein belongs to the 4-oxalocrotonate tautomerase family.

The chain is Probable tautomerase XF_1725 from Xylella fastidiosa (strain 9a5c).